Consider the following 801-residue polypeptide: Quinoprotein glucose dehydrogenase A (801 aa).

Positions 1–33 are cleaved as a signal peptide; the sequence is MNQPTSRSGLTTFTVIIIGLLALFLLIGGIWLA. Helical transmembrane passes span 39-55, 59-79, 94-108, and 119-138; these read IYYI…AWQL, ASTA…WSVW, ILGI…PAVT, and VALS…SIFN. The active-site Proton acceptor is the Asp-471.

Belongs to the bacterial PQQ dehydrogenase family. Monomer. It depends on pyrroloquinoline quinone as a cofactor.

It localises to the cell inner membrane. The catalysed reaction is D-glucose + A = D-glucono-1,5-lactone + AH2. In terms of biological role, catalyzes an exceptionally high rate of oxidation of a wide range of aldose sugars, including D-glucose, galactose, arabinose and xylose, and also the disaccharides lactose, cellobiose and maltose. This chain is Quinoprotein glucose dehydrogenase A (gdhA), found in Acinetobacter calcoaceticus.